Here is a 1215-residue protein sequence, read N- to C-terminus: Homeodomain-interacting protein kinase 3 (1215 aa).

Lys-27 participates in a covalent cross-link: Glycyl lysine isopeptide (Lys-Gly) (interchain with G-Cter in SUMO2). In terms of domain architecture, Protein kinase spans 197-525 (YEVLDFLGRG…PAETLNHPFV (329 aa)). ATP contacts are provided by residues 203-211 (LGRGTFGQV) and Lys-226. Asp-322 functions as the Proton acceptor in the catalytic mechanism. Tyr-359 carries the phosphotyrosine modification. An interaction with AR region spans residues 767–944 (QNRGILVKLM…NSMSDEEQES (178 aa)). Residues 796–891 (NTNIPHSAFI…SQRHSLRECK (96 aa)) form an interaction with FAS region. The required for localization to nuclear speckles stretch occupies residues 855–1011 (QTIIIADSPS…ENGLNADEHM (157 aa)). Residues 866–918 (AVSVITISSDTDEEETSQRHSLRECKGSLDCEACQSTLNIDRMCSLSSPDSTL) are SUMO interaction motifs (SIM); required for nuclear localization and kinase activity. The segment at 870 to 880 (ITISSDTDEEE) is interaction with UBL1. The span at 912-929 (SSPDSTLSTSSSGQSSPS) shows a compositional bias: low complexity. The disordered stretch occupies residues 912-987 (SSPDSTLSTS…ELVSSADTET (76 aa)). Polar residues predominate over residues 945 to 957 (SCDTVDGSPTSDS). A Glycyl lysine isopeptide (Lys-Gly) (interchain with G-Cter in SUMO) cross-link involves residue Lys-1208.

Belongs to the protein kinase superfamily. CMGC Ser/Thr protein kinase family. HIPK subfamily. As to quaternary structure, interacts with Nkx1-2. Interacts with FAS and DAXX. Probably part of a complex consisting of HIPK3, FAS and FADD. Interacts with and stabilizes ligand-bound androgen receptor (AR). Interacts with UBL1/SUMO-1. Binds to NR5A1/SF1, SPEN/MINT and RUNX2. Post-translationally, autophosphorylated, but autophosphorylation is not required for catalytic activity. In terms of processing, may be sumoylated. As to expression, overexpressed in multidrug resistant cells. Highly expressed in heart and skeletal muscle, and at lower levels in placenta, pancreas, brain, spleen, prostate, thymus, testis, small intestine, colon and leukocytes. Not found in liver and lung.

It localises to the cytoplasm. The protein localises to the nucleus. It catalyses the reaction L-seryl-[protein] + ATP = O-phospho-L-seryl-[protein] + ADP + H(+). The enzyme catalyses L-threonyl-[protein] + ATP = O-phospho-L-threonyl-[protein] + ADP + H(+). Its function is as follows. Serine/threonine-protein kinase involved in transcription regulation, apoptosis and steroidogenic gene expression. Phosphorylates JUN and RUNX2. Seems to negatively regulate apoptosis by promoting FADD phosphorylation. Enhances androgen receptor-mediated transcription. May act as a transcriptional corepressor for NK homeodomain transcription factors. The phosphorylation of NR5A1 activates SF1 leading to increased steroidogenic gene expression upon cAMP signaling pathway stimulation. In osteoblasts, supports transcription activation: phosphorylates RUNX2 that synergizes with SPEN/MINT to enhance FGFR2-mediated activation of the osteocalcin FGF-responsive element (OCFRE). The protein is Homeodomain-interacting protein kinase 3 (HIPK3) of Homo sapiens (Human).